A 200-amino-acid chain; its full sequence is Holliday junction branch migration complex subunit RuvA (200 aa).

The tract at residues 1 to 63 is domain I; the sequence is MYAYVKGKLT…EDAQLLYGFS (63 aa). The segment at 64–142 is domain II; that stretch reads SEEEKDMFLS…ITEEDSDSLL (79 aa). Residues 143-149 form a flexible linker region; the sequence is QVDATST. Positions 150-200 are domain III; that stretch reads VQDQFVQEAMLALEALGYSKRELAKVEKTLNKNKYDSVDEAVKAGLQLVVS.

The protein belongs to the RuvA family. Homotetramer. Forms an RuvA(8)-RuvB(12)-Holliday junction (HJ) complex. HJ DNA is sandwiched between 2 RuvA tetramers; dsDNA enters through RuvA and exits via RuvB. An RuvB hexamer assembles on each DNA strand where it exits the tetramer. Each RuvB hexamer is contacted by two RuvA subunits (via domain III) on 2 adjacent RuvB subunits; this complex drives branch migration. In the full resolvosome a probable DNA-RuvA(4)-RuvB(12)-RuvC(2) complex forms which resolves the HJ.

Its subcellular location is the cytoplasm. Functionally, the RuvA-RuvB-RuvC complex processes Holliday junction (HJ) DNA during genetic recombination and DNA repair, while the RuvA-RuvB complex plays an important role in the rescue of blocked DNA replication forks via replication fork reversal (RFR). RuvA specifically binds to HJ cruciform DNA, conferring on it an open structure. The RuvB hexamer acts as an ATP-dependent pump, pulling dsDNA into and through the RuvAB complex. HJ branch migration allows RuvC to scan DNA until it finds its consensus sequence, where it cleaves and resolves the cruciform DNA. This chain is Holliday junction branch migration complex subunit RuvA, found in Staphylococcus aureus (strain Mu3 / ATCC 700698).